Reading from the N-terminus, the 670-residue chain is Transketolase, chromosomal (670 aa).

His32 is a substrate binding site. Residues His72 and 120–122 contribute to the thiamine diphosphate site; that span reads GPL. Asp161 lines the Mg(2+) pocket. Positions 162 and 191 each coordinate thiamine diphosphate. The Mg(2+) site is built by Asn191 and Ile193. 3 residues coordinate substrate: His267, Arg364, and Ser391. Position 267 (His267) interacts with thiamine diphosphate. The Proton donor role is filled by Glu417. Thiamine diphosphate is bound at residue Phe443. The substrate site is built by His467, Asp475, and Arg526.

It belongs to the transketolase family. As to quaternary structure, homodimer. It depends on Mg(2+) as a cofactor. Requires Ca(2+) as cofactor. Mn(2+) is required as a cofactor. Co(2+) serves as cofactor. The cofactor is thiamine diphosphate.

The enzyme catalyses D-sedoheptulose 7-phosphate + D-glyceraldehyde 3-phosphate = aldehydo-D-ribose 5-phosphate + D-xylulose 5-phosphate. It functions in the pathway carbohydrate biosynthesis; Calvin cycle. Functionally, catalyzes the transfer of a two-carbon ketol group from a ketose donor to an aldose acceptor, via a covalent intermediate with the cofactor thiamine pyrophosphate. This is Transketolase, chromosomal (cbbTC) from Cupriavidus necator (strain ATCC 17699 / DSM 428 / KCTC 22496 / NCIMB 10442 / H16 / Stanier 337) (Ralstonia eutropha).